The following is a 427-amino-acid chain: Trigger factor (427 aa).

The 86-residue stretch at Gly163 to Pro248 folds into the PPIase FKBP-type domain.

It belongs to the FKBP-type PPIase family. Tig subfamily.

It is found in the cytoplasm. The catalysed reaction is [protein]-peptidylproline (omega=180) = [protein]-peptidylproline (omega=0). Involved in protein export. Acts as a chaperone by maintaining the newly synthesized protein in an open conformation. Functions as a peptidyl-prolyl cis-trans isomerase. The polypeptide is Trigger factor (Streptococcus pneumoniae (strain 70585)).